The primary structure comprises 161 residues: Transcriptional repressor NrdR (161 aa).

Polar residues predominate over residues 1 to 11; sequence MRCPSCSSLDT. Residues 1-20 are disordered; sequence MRCPSCSSLDTQVKDSRPTE. Residues 3-34 fold into a zinc finger; it reads CPSCSSLDTQVKDSRPTEDSAVIRRRRVCMAC. One can recognise an ATP-cone domain in the interval 49–139; sequence LTVIKRNGRR…VYRNFREAKD (91 aa).

This sequence belongs to the NrdR family. Zn(2+) is required as a cofactor.

Negatively regulates transcription of bacterial ribonucleotide reductase nrd genes and operons by binding to NrdR-boxes. This Rhodopseudomonas palustris (strain BisB18) protein is Transcriptional repressor NrdR.